Consider the following 357-residue polypeptide: Phosphoribosylformylglycinamidine cyclo-ligase (357 aa).

The protein belongs to the AIR synthase family.

The protein localises to the cytoplasm. The enzyme catalyses 2-formamido-N(1)-(5-O-phospho-beta-D-ribosyl)acetamidine + ATP = 5-amino-1-(5-phospho-beta-D-ribosyl)imidazole + ADP + phosphate + H(+). It functions in the pathway purine metabolism; IMP biosynthesis via de novo pathway; 5-amino-1-(5-phospho-D-ribosyl)imidazole from N(2)-formyl-N(1)-(5-phospho-D-ribosyl)glycinamide: step 2/2. This Rhizobium leguminosarum protein is Phosphoribosylformylglycinamidine cyclo-ligase.